Consider the following 298-residue polypeptide: MFKENKVKLGIAPIGWTNDDMPELGGEITFEQCISEMALAGFVGCEVGNKYPRDTKILKKALSLRGLSIASAWFSAFLTSKPFEETAEAFKAHRDFLYEMGAKVIVVSEQGNSIQGQMETPLFDKKPVFTEEEWDLLIDGLNRLGDLAAEKGMNIVYHHHMGTGIQTTEEIDRLMEETDPKKVSLLYDTGHLVFSGEDHLHVLNKHINRIRHVHLKDVRIEVANKVREEKMSFLQAVKAGVFTVPGDGVIDFKPVFEALDAAGYEGWFVVEAEQDPAIANPFEYALKARQYIRETCGL.

The protein belongs to the IolE/MocC family. Glutathione is required as a cofactor. Co(2+) serves as cofactor. Requires Mn(2+) as cofactor.

It catalyses the reaction scyllo-inosose = 3D-3,5/4-trihydroxycyclohexane-1,2-dione + H2O. It functions in the pathway polyol metabolism; myo-inositol degradation into acetyl-CoA; acetyl-CoA from myo-inositol: step 2/7. Its function is as follows. Catalyzes the dehydration of inosose (2-keto-myo-inositol, 2KMI or 2,4,6/3,5-pentahydroxycyclohexanone) to 3D-(3,5/4)-trihydroxycyclohexane-1,2-dione (D-2,3-diketo-4-deoxy-epi-inositol). The protein is Inosose dehydratase of Geobacillus thermodenitrificans (strain NG80-2).